The chain runs to 617 residues: Elongation factor 4 (617 aa).

One can recognise a tr-type G domain in the interval 17–198 (AIIRNFCIIA…KIVRDLPAPV (182 aa)). Residues 29–34 (DHGKST) and 145–148 (NKID) each bind GTP.

Belongs to the TRAFAC class translation factor GTPase superfamily. Classic translation factor GTPase family. LepA subfamily.

The protein resides in the cell membrane. The enzyme catalyses GTP + H2O = GDP + phosphate + H(+). Required for accurate and efficient protein synthesis under certain stress conditions. May act as a fidelity factor of the translation reaction, by catalyzing a one-codon backward translocation of tRNAs on improperly translocated ribosomes. Back-translocation proceeds from a post-translocation (POST) complex to a pre-translocation (PRE) complex, thus giving elongation factor G a second chance to translocate the tRNAs correctly. Binds to ribosomes in a GTP-dependent manner. In Arthrobacter sp. (strain FB24), this protein is Elongation factor 4.